A 222-amino-acid chain; its full sequence is N-acetyltransferase 8B (222 aa).

Residues 1–42 lie on the Cytoplasmic side of the membrane; that stretch reads MVSYHICEYQDSDYKSVVDVFTKGAEEYIPSTFRHLLLLPRT. Residues 43-67 form a helical; Signal-anchor for type II membrane protein membrane-spanning segment; it reads LLLLLGVSLALVLVSGSWLLAVVCI. Positions 62-217 constitute an N-acetyltransferase domain; it reads LAVVCIFFLL…VGIRFVQLNY (156 aa). At 68 to 222 the chain is on the lumenal side; it reads FFLLPFLWFL…VQLNYSFPSA (155 aa). Lysine 99 is modified (N6-acetyllysine).

The protein belongs to the NAT8 family. Acetylation on Lys-99 modulates enzymatic activity.

The protein localises to the endoplasmic reticulum-Golgi intermediate compartment membrane. It is found in the endoplasmic reticulum membrane. It carries out the reaction L-lysyl-[protein] + acetyl-CoA = N(6)-acetyl-L-lysyl-[protein] + CoA + H(+). Functionally, endoplasmic reticulum (ER)-membrane-bound lysine N-acetyltransferase catalyzing the N6-acetylation of lysine residues in the lumen of the ER in various proteins, including PROM1 and BACE1, using acetyl-CoA as acetyl donor. Thereby, may regulate apoptosis through the acetylation and the regulation of the expression of PROM1. Acetylates and stabilizes BACE1 immature protein, leading to increased steady-state levels in neurons. By acting on BACE1 expression, may regulate amyloid beta-peptide formation. N(6)-lysine acetylation in ER maintains protein homeostasis and regulates reticulophagy. This is N-acetyltransferase 8B from Rattus norvegicus (Rat).